The following is a 398-amino-acid chain: SEC12-like protein 1 (398 aa).

M1 is subject to N-acetylmethionine. The Cytoplasmic segment spans residues 1 to 337; that stretch reads MEIEEASRES…TVPKEWKEWQ (337 aa). 5 WD repeats span residues 71–110, 120–159, 162–201, 252–291, and 296–334; these read DSDGDPVAVSVHPGGDYFVCSTSKGGCKLFELVGGATGIT, QNAGLQKCMAFSFDGSKLAVGGVDGCLRIMEWPNLSVILD, KAHKSIRDMDFSLDSEFLATTSTDGSARIWKAEDGFPLST, LSRKTASTMAVSLDGKYIALGGKDGDVSVAEVKTMEIYHY, and HLGQSIASLEFCPSERVMLTTSSEWGEMVTKLTVPKEWK. A helical membrane pass occupies residues 338–358; the sequence is IYALLFCLFMASVIAAYVFFE. Residues 359–398 lie on the Lumenal side of the membrane; sequence NSDSFWKLPMGKDQKRPKISLFGGSSSTPSEDHSRWNLDL.

Ubiquitous with higher levels in flowers, roots and senescing leaves.

Its subcellular location is the endoplasmic reticulum membrane. Involved in Pi uptake by facilitating the trafficking of PHT1-1/PHT1;1 from the endoplasmic reticulum to the plasma membrane. This chain is SEC12-like protein 1 (PHF1), found in Arabidopsis thaliana (Mouse-ear cress).